Consider the following 456-residue polypeptide: Glycine--tRNA ligase (456 aa).

Positions 98 and 168 each coordinate substrate. ATP is bound by residues 200 to 202, 210 to 215, 285 to 286, and 329 to 332; these read RNE, FRTREF, EL, and GVER. 215-219 contacts substrate; the sequence is FEQME. Position 325–329 (325–329) interacts with substrate; the sequence is EPSVG.

This sequence belongs to the class-II aminoacyl-tRNA synthetase family. In terms of assembly, homodimer.

The protein localises to the cytoplasm. The enzyme catalyses tRNA(Gly) + glycine + ATP = glycyl-tRNA(Gly) + AMP + diphosphate. Its function is as follows. Catalyzes the attachment of glycine to tRNA(Gly). The protein is Glycine--tRNA ligase of Mycoplasma mycoides subsp. mycoides SC (strain CCUG 32753 / NCTC 10114 / PG1).